The sequence spans 300 residues: Sulfate adenylyltransferase subunit 2 (300 aa).

The disordered stretch occupies residues 281-300 (RAIDRDEAGSMEKKKREGYF).

The protein belongs to the PAPS reductase family. CysD subfamily. In terms of assembly, heterodimer composed of CysD, the smaller subunit, and CysN.

The catalysed reaction is sulfate + ATP + H(+) = adenosine 5'-phosphosulfate + diphosphate. Its pathway is sulfur metabolism; hydrogen sulfide biosynthesis; sulfite from sulfate: step 1/3. Functionally, with CysN forms the ATP sulfurylase (ATPS) that catalyzes the adenylation of sulfate producing adenosine 5'-phosphosulfate (APS) and diphosphate, the first enzymatic step in sulfur assimilation pathway. APS synthesis involves the formation of a high-energy phosphoric-sulfuric acid anhydride bond driven by GTP hydrolysis by CysN coupled to ATP hydrolysis by CysD. The polypeptide is Sulfate adenylyltransferase subunit 2 (Brucella abortus (strain 2308)).